The chain runs to 794 residues: ATP-dependent RNA helicase SUPV3L1, mitochondrial (794 aa).

Residues 1-30 (MRRCAWPLLRLSSRVGLALRHGGAVRLRQA) constitute a mitochondrion transit peptide. In terms of domain architecture, Helicase ATP-binding spans 182 to 322 (EARAIQRKII…AIDLVTELMY (141 aa)). Position 195–202 (195–202 (GPTNSGKT)) interacts with ATP. Residues 341–506 (VLDYALESLD…GLHPTPEQIE (166 aa)) enclose the Helicase C-terminal domain. Disordered stretches follow at residues 678-741 (EVMS…HGRG) and 764-794 (EWQD…KKKK). Positions 689 to 704 (TKRDARTVSDHRDAKS) are enriched in basic and acidic residues.

It belongs to the helicase family. The cofactor is Mg(2+). Mn(2+) is required as a cofactor.

The protein localises to the nucleus. Its subcellular location is the mitochondrion matrix. It localises to the mitochondrion nucleoid. The enzyme catalyses ATP + H2O = ADP + phosphate + H(+). Functionally, major helicase player in mitochondrial RNA metabolism. Component of the mitochondrial degradosome (mtEXO) complex, that degrades 3' overhang double-stranded RNA with a 3'-to-5' directionality in an ATP-dependent manner. ATPase and ATP-dependent multisubstrate helicase, able to unwind double-stranded (ds) DNA and RNA, and RNA/DNA heteroduplexes in the 5'-to-3' direction. Plays a role in the RNA surveillance system in mitochondria; regulates the stability of mature mRNAs, the removal of aberrantly formed mRNAs and the rapid degradation of non coding processing intermediates. Also implicated in recombination and chromatin maintenance pathways. May protect cells from apoptosis. Associates with mitochondrial DNA. The chain is ATP-dependent RNA helicase SUPV3L1, mitochondrial (SUPV3L1) from Gallus gallus (Chicken).